The sequence spans 177 residues: Large ribosomal subunit protein uL6 (177 aa).

This sequence belongs to the universal ribosomal protein uL6 family. In terms of assembly, part of the 50S ribosomal subunit.

This protein binds to the 23S rRNA, and is important in its secondary structure. It is located near the subunit interface in the base of the L7/L12 stalk, and near the tRNA binding site of the peptidyltransferase center. The sequence is that of Large ribosomal subunit protein uL6 from Acinetobacter baumannii (strain SDF).